Here is a 177-residue protein sequence, read N- to C-terminus: Large ribosomal subunit protein uL6 (177 aa).

It belongs to the universal ribosomal protein uL6 family. Part of the 50S ribosomal subunit.

Functionally, this protein binds to the 23S rRNA, and is important in its secondary structure. It is located near the subunit interface in the base of the L7/L12 stalk, and near the tRNA binding site of the peptidyltransferase center. The protein is Large ribosomal subunit protein uL6 of Methanosarcina barkeri (strain Fusaro / DSM 804).